A 593-amino-acid polypeptide reads, in one-letter code: Insulin-like growth factor 2 mRNA-binding protein 3-B (593 aa).

RRM domains follow at residues 2-75 and 81-156; these read NKLY…HSVP and RKLQ…YIPD. The disordered stretch occupies residues 159–208; that stretch reads ATPQSPSQQLQQPQQQHPQGRRGFGQRGPARQGSPGAAARPKPQSEVPLR. The span at 161 to 176 shows a compositional bias: low complexity; that stretch reads PQSPSQQLQQPQQQHP. KH domains follow at residues 204–269 and 285–352; these read EVPL…CKII and EIPL…EEEV. A compositionally biased stretch (low complexity) spans 390-402; that stretch reads SGMPPPSAGVSSP. The interval 390 to 412 is disordered; the sequence is SGMPPPSAGVSSPTTSASYPPFG. 2 consecutive KH domains span residues 417–482 and 499–565; these read SETV…QGRI and KLEA…QRKI. Residues 571–593 are disordered; sequence QVRRQQQQQQKTAQSGQPQPRRK.

This sequence belongs to the RRM IMP/VICKZ family. In terms of assembly, homodimer and multimer. Associates with microtubules. Interaction with a translocation machinery protein TRAPA of the endoplasmic reticulum. Component of a mRNP complex, at least composed of DAZAP1, IGF2BP3, STAU and VgRBP60. The mRNP complex with DAZAP1, IGF2BP3, STAU and VgRBP60 is only found in the cytoplasm. Interacts with a hnRNP 1 related RNA transport protein VgRBP60 both in the nucleus (in an RNA-independent manner) and the cytoplasm (in an RNA-dependent manner). Found in a B3 activator complex. Expressed in oocytes, kidney and pancreas (at protein level). Expressed in oocytes, kidney and pancreas.

The protein localises to the nucleus. Its subcellular location is the cytoplasm. The protein resides in the endoplasmic reticulum. Its function is as follows. RNA-binding protein that acts as a regulator of mRNA transport and localization. Binds to the RNA sequence motif 5'-UUCAC-3'. Preferentially binds to N6-methyladenosine (m6A)-containing mRNAs and increases their stability. Mediates the specific association of Vg1 RNA to microtubules. May regulate mRNA translation. Binds specifically to the vegetal localization elements (VLE or VgLE) in the 3'-UTR of Vg1 and VegT mRNAs. Binds to the Vg1 and VegT mRNAs in both the nucleus and the cytoplasm. May regulate mRNA translation. Acts as a transcription regulator. Binds to the 5'-[TA]GGTTACT-3' motif within element 3 of the TFIIIA gene promoter. In Xenopus laevis (African clawed frog), this protein is Insulin-like growth factor 2 mRNA-binding protein 3-B (igf2bp3-b).